A 328-amino-acid chain; its full sequence is tRNA(Ile)-lysidine synthase (328 aa).

An ATP-binding site is contributed by 35–40; sequence SGGADS.

Belongs to the tRNA(Ile)-lysidine synthase family.

It is found in the cytoplasm. The catalysed reaction is cytidine(34) in tRNA(Ile2) + L-lysine + ATP = lysidine(34) in tRNA(Ile2) + AMP + diphosphate + H(+). Ligates lysine onto the cytidine present at position 34 of the AUA codon-specific tRNA(Ile) that contains the anticodon CAU, in an ATP-dependent manner. Cytidine is converted to lysidine, thus changing the amino acid specificity of the tRNA from methionine to isoleucine. The sequence is that of tRNA(Ile)-lysidine synthase from Polaromonas naphthalenivorans (strain CJ2).